A 140-amino-acid polypeptide reads, in one-letter code: Nucleoside diphosphate kinase (140 aa).

Positions 11, 59, 87, 93, 104, and 114 each coordinate ATP. His-117 functions as the Pros-phosphohistidine intermediate in the catalytic mechanism.

The protein belongs to the NDK family. In terms of assembly, homotetramer. The cofactor is Mg(2+).

The protein localises to the cytoplasm. The catalysed reaction is a 2'-deoxyribonucleoside 5'-diphosphate + ATP = a 2'-deoxyribonucleoside 5'-triphosphate + ADP. The enzyme catalyses a ribonucleoside 5'-diphosphate + ATP = a ribonucleoside 5'-triphosphate + ADP. Functionally, major role in the synthesis of nucleoside triphosphates other than ATP. The ATP gamma phosphate is transferred to the NDP beta phosphate via a ping-pong mechanism, using a phosphorylated active-site intermediate. The polypeptide is Nucleoside diphosphate kinase (Rhizobium etli (strain CIAT 652)).